We begin with the raw amino-acid sequence, 151 residues long: Small ribosomal subunit protein uS15 (151 aa).

It belongs to the universal ribosomal protein uS15 family.

This is Small ribosomal subunit protein uS15 (RPS13) from Ciona intestinalis (Transparent sea squirt).